We begin with the raw amino-acid sequence, 226 residues long: Protein-L-isoaspartate(D-aspartate) O-methyltransferase (226 aa).

S-adenosyl-L-homocysteine is bound by residues 57-60 (VTIS), H65, S89, 115-116 (EH), 147-148 (DG), and T222. S60 is a catalytic residue.

This sequence belongs to the methyltransferase superfamily. L-isoaspartyl/D-aspartyl protein methyltransferase family. As to quaternary structure, monomer.

The protein localises to the cytoplasm. It localises to the cytosol. It carries out the reaction [protein]-L-isoaspartate + S-adenosyl-L-methionine = [protein]-L-isoaspartate alpha-methyl ester + S-adenosyl-L-homocysteine. Functionally, initiates the repair of damaged proteins by catalyzing methyl esterification of L-isoaspartyl and D-aspartyl residues produced by spontaneous isomerization and racemization of L-aspartyl and L-asparaginyl residues in aging peptides and proteins. This Drosophila melanogaster (Fruit fly) protein is Protein-L-isoaspartate(D-aspartate) O-methyltransferase (Pcmt).